Reading from the N-terminus, the 461-residue chain is Photosystem II CP43 reaction center protein (461 aa).

A run of 5 helical transmembrane segments spans residues 57–81 (LFEV…SHLA), 122–143 (LRGP…KDKN), 166–188 (KAMF…RIIS), 243–263 (KPFG…LSYS), and 279–300 (WYNN…ASQS). E355 contributes to the [CaMn4O5] cluster binding site. A helical transmembrane segment spans residues 435-459 (RARAAAAGFEKGIDRATEPVLAMRD).

This sequence belongs to the PsbB/PsbC family. PsbC subfamily. As to quaternary structure, PSII is composed of 1 copy each of membrane proteins PsbA, PsbB, PsbC, PsbD, PsbE, PsbF, PsbH, PsbI, PsbJ, PsbK, PsbL, PsbM, PsbT, PsbX, PsbY, PsbZ, Psb30/Ycf12, peripheral proteins PsbO, CyanoQ (PsbQ), PsbU, PsbV and a large number of cofactors. It forms dimeric complexes. It depends on Binds multiple chlorophylls and provides some of the ligands for the Ca-4Mn-5O cluster of the oxygen-evolving complex. It may also provide a ligand for a Cl- that is required for oxygen evolution. PSII binds additional chlorophylls, carotenoids and specific lipids. as a cofactor.

It is found in the cellular thylakoid membrane. In terms of biological role, one of the components of the core complex of photosystem II (PSII). It binds chlorophyll and helps catalyze the primary light-induced photochemical processes of PSII. PSII is a light-driven water:plastoquinone oxidoreductase, using light energy to abstract electrons from H(2)O, generating O(2) and a proton gradient subsequently used for ATP formation. This chain is Photosystem II CP43 reaction center protein, found in Synechococcus elongatus (strain ATCC 33912 / PCC 7942 / FACHB-805) (Anacystis nidulans R2).